A 383-amino-acid polypeptide reads, in one-letter code: Opsin Rh4 (383 aa).

Over M1 to M57 the chain is Extracellular. N-linked (GlcNAc...) asparagine glycosylation occurs at N9. The helical transmembrane segment at H58 to I82 threads the bilayer. Residues F83 to N94 are Cytoplasmic-facing. A helical membrane pass occupies residues M95 to N117. Over S118–F133 the chain is Extracellular. C130 and C207 form a disulfide bridge. A helical membrane pass occupies residues A134–Y153. The Cytoplasmic portion of the chain corresponds to D154–K171. Residues A172–D196 form a helical membrane-spanning segment. Residues R197–L220 lie on the Extracellular side of the membrane. The chain crosses the membrane as a helical span at residues F221–V248. The Cytoplasmic segment spans residues F249–K284. The helical transmembrane segment at A285–A308 threads the bilayer. Residues F309 to T316 are Extracellular-facing. The helical transmembrane segment at P317–S341 threads the bilayer. K328 is modified (N6-(retinylidene)lysine). Residues H342 to A383 are Cytoplasmic-facing. Positions K361 to A383 are disordered. The span at E364–A383 shows a compositional bias: low complexity.

This sequence belongs to the G-protein coupled receptor 1 family. Opsin subfamily. In terms of processing, phosphorylated on some or all of the serine and threonine residues present in the C-terminal region.

The protein localises to the membrane. Visual pigments are the light-absorbing molecules that mediate vision. They consist of an apoprotein, opsin, covalently linked to cis-retinal. In Drosophila virilis (Fruit fly), this protein is Opsin Rh4 (Rh4).